We begin with the raw amino-acid sequence, 182 residues long: Adenylate kinase isoenzyme 6 homolog (182 aa).

The disordered stretch occupies residues 1-20 (MATPETRRRPNILVTGSPGT). Residues Gly19, Gly21, Lys22, Ser23, and Thr24 each contribute to the ATP site. The NMPbind stretch occupies residues 39–62 (EVSKEVRENNLQGDFDEQYNCHVL). Positions 116–126 (SRGYSEFKIKE) are LID. Residue Arg117 participates in ATP binding.

This sequence belongs to the adenylate kinase family. AK6 subfamily. Monomer and homodimer. Interacts with small ribosomal subunit protein uS11. Not a structural component of 43S pre-ribosomes, but transiently interacts with them by binding to uS11.

The protein localises to the cytoplasm. Its subcellular location is the nucleus. The catalysed reaction is AMP + ATP = 2 ADP. It carries out the reaction ATP + H2O = ADP + phosphate + H(+). Functionally, broad-specificity nucleoside monophosphate (NMP) kinase that catalyzes the reversible transfer of the terminal phosphate group between nucleoside triphosphates and monophosphates. Also has ATPase activity. Involved in the late cytoplasmic maturation steps of the 40S ribosomal particles, specifically 18S rRNA maturation. While NMP activity is not required for ribosome maturation, ATPase activity is. Associates transiently with small ribosomal subunit protein uS11. ATP hydrolysis breaks the interaction with uS11. May temporarily remove uS11 from the ribosome to enable a conformational change of the ribosomal RNA that is needed for the final maturation step of the small ribosomal subunit. Its NMP activity may have a role in nuclear energy homeostasis. AMP and dAMP are the preferred substrates, but CMP and TMP are also good substrates. ATP and dATP are the best phosphate donors. The protein is Adenylate kinase isoenzyme 6 homolog of Caenorhabditis elegans.